Here is a 374-residue protein sequence, read N- to C-terminus: Arf-GAP with dual PH domain-containing protein 1 (374 aa).

The Arf-GAP domain maps to 7 to 126; it reads RAVLELLQRP…EFIYPEKQEP (120 aa). The C4-type zinc finger occupies 21-44; it reads CADCGAPDPDWASYTLGVFICLSC. Ser-87 carries the post-translational modification Phosphoserine; by PKC. PH domains follow at residues 129 to 230 and 252 to 356; these read AGYR…AARF and NYLK…KAVD. N6-acetyllysine is present on Lys-272. Thr-276 is modified (phosphothreonine; by PKC).

As to quaternary structure, interacts with PRKCA, PRKCI and PRKCZ. Interacts with the N-terminal region of PRKD1. In terms of processing, phosphorylated by PRKCA, PRKCI, PRKCZ and PRKD1 in vitro. In terms of tissue distribution, expressed at highest levels in brain and at lower levels in peripheral blood leukocytes.

It is found in the nucleus. It localises to the cytoplasm. Functionally, GTPase-activating protein for the ADP ribosylation factor family. Binds phosphatidylinositol 3,4,5-trisphosphate (PtdInsP3) and inositol 1,3,4,5-tetrakisphosphate (InsP4). Regulates the incorporation of CD63 and CD9 into multivesicular bodies. In Homo sapiens (Human), this protein is Arf-GAP with dual PH domain-containing protein 1 (ADAP1).